Reading from the N-terminus, the 538-residue chain is Nicotinate phosphoribosyltransferase (538 aa).

Nicotinate contacts are provided by Y21 and T210. Phosphohistidine is present on H213. R318 contributes to the nicotinate binding site. Residue T380 coordinates 5-phospho-alpha-D-ribose 1-diphosphate.

It belongs to the NAPRTase family. Homodimer. The cofactor is Mg(2+). It depends on Mn(2+) as a cofactor. Post-translationally, transiently phosphorylated on a His residue during the reaction cycle. Phosphorylation strongly increases the affinity for substrates and increases the rate of nicotinate D-ribonucleotide production. Dephosphorylation regenerates the low-affinity form of the enzyme, leading to product release.

The protein resides in the cytoplasm. The protein localises to the cytosol. It catalyses the reaction nicotinate + 5-phospho-alpha-D-ribose 1-diphosphate + ATP + H2O = nicotinate beta-D-ribonucleotide + ADP + phosphate + diphosphate. The protein operates within cofactor biosynthesis; NAD(+) biosynthesis; nicotinate D-ribonucleotide from nicotinate: step 1/1. Functionally, catalyzes the first step in the biosynthesis of NAD from nicotinic acid, the ATP-dependent synthesis of beta-nicotinate D-ribonucleotide from nicotinate and 5-phospho-D-ribose 1-phosphate. Helps prevent cellular oxidative stress via its role in NAD biosynthesis. The protein is Nicotinate phosphoribosyltransferase (NAPRT) of Bos taurus (Bovine).